A 316-amino-acid chain; its full sequence is tRNA methyltransferase 10 homolog B (316 aa).

Residues 73 to 98 are a coiled coil; the sequence is EKIVAAKKSKRKQEKERRKANRVENS. The segment at 77–96 is disordered; sequence AAKKSKRKQEKERRKANRVE. The SAM-dependent MTase TRM10-type domain maps to 113–310; the sequence is IKERLLEAKH…KGVSSRKGYV (198 aa).

This sequence belongs to the class IV-like SAM-binding methyltransferase superfamily. TRM10 family.

The enzyme catalyses guanosine(9) in tRNA + S-adenosyl-L-methionine = N(1)-methylguanosine(9) in tRNA + S-adenosyl-L-homocysteine + H(+). Its function is as follows. S-adenosyl-L-methionine-dependent guanine N(1)-methyltransferase that catalyzes the formation of N(1)-methylguanine at position 9 (m1G9) in tRNAs. Probably not able to catalyze formation of N(1)-methyladenine at position 9 (m1A9) in tRNAs. The protein is tRNA methyltransferase 10 homolog B (TRMT10B) of Bos taurus (Bovine).